The chain runs to 540 residues: Protein GDAP2 homolog (540 aa).

In terms of domain architecture, Macro spans 56 to 235 (RSPFPLCKDV…TYEVLAPLYF (180 aa)). Residues 371-528 (QVEDLTEVSG…YITEYDMATN (158 aa)) enclose the CRAL-TRIO domain.

It belongs to the GDAP2 family.

The chain is Protein GDAP2 homolog from Drosophila melanogaster (Fruit fly).